Here is a 585-residue protein sequence, read N- to C-terminus: ADP-ribosylation factor-binding protein GGA2 (585 aa).

One can recognise a VHS domain in the interval 33 to 169; that stretch reads ACRMSLAEPD…LLKYKGYAFP (137 aa). Glycyl lysine isopeptide (Lys-Gly) (interchain with G-Cter in ubiquitin) cross-links involve residues Lys180 and Lys287. Residues 196-321 form the GAT domain; it reads EIAQAAKLEE…LLEKFNLLKN (126 aa). The interval 358 to 378 is disordered; sequence LDEAPSQGNNNTNGTGTPAAA. Low complexity predominate over residues 365-374; the sequence is GNNNTNGTGT. The region spanning 466-581 is the GAE domain; the sequence is TTTAPARTLV…TQAEETAVFT (116 aa).

As to quaternary structure, binds to ARF1 and ARF2.

The protein resides in the golgi apparatus. It is found in the trans-Golgi network. In terms of biological role, may play a role in the regulation of membrane traffic through the trans-Golgi network. The sequence is that of ADP-ribosylation factor-binding protein GGA2 (GGA2) from Saccharomyces cerevisiae (strain ATCC 204508 / S288c) (Baker's yeast).